The following is a 343-amino-acid chain: Aspartate carbamoyltransferase catalytic subunit (343 aa).

Carbamoyl phosphate-binding residues include R91 and T92. K119 is an L-aspartate binding site. 3 residues coordinate carbamoyl phosphate: R141, H171, and Q174. The L-aspartate site is built by R204 and R259. G300 and P301 together coordinate carbamoyl phosphate.

Belongs to the aspartate/ornithine carbamoyltransferase superfamily. ATCase family. In terms of assembly, heterododecamer (2C3:3R2) of six catalytic PyrB chains organized as two trimers (C3), and six regulatory PyrI chains organized as three dimers (R2).

It carries out the reaction carbamoyl phosphate + L-aspartate = N-carbamoyl-L-aspartate + phosphate + H(+). Its pathway is pyrimidine metabolism; UMP biosynthesis via de novo pathway; (S)-dihydroorotate from bicarbonate: step 2/3. In terms of biological role, catalyzes the condensation of carbamoyl phosphate and aspartate to form carbamoyl aspartate and inorganic phosphate, the committed step in the de novo pyrimidine nucleotide biosynthesis pathway. The protein is Aspartate carbamoyltransferase catalytic subunit of Burkholderia mallei (strain NCTC 10247).